The following is a 320-amino-acid chain: uncharacterized protein (320 aa).

As to quaternary structure, interacts with VP1054, VP39 and VP80.

It localises to the virion. The protein localises to the host nucleus. Its subcellular location is the host cytoplasm. Functionally, plays a role in nucleocapsid assembly and is essential for viral replication. Distributed over the cylindrical capsid sheath of nucleocapsid. This is an uncharacterized protein from Lepidoptera (butterflies and moths).